Reading from the N-terminus, the 273-residue chain is Outer surface protein A (273 aa).

The first 16 residues, 1 to 16 (MKKYLLGIGLILALIA), serve as a signal peptide directing secretion. Cysteine 17 carries the N-palmitoyl cysteine lipid modification. Cysteine 17 carries the S-diacylglycerol cysteine lipid modification.

The protein belongs to the OspA lipoprotein family.

The protein localises to the cell outer membrane. Its subcellular location is the cell surface. This Borreliella burgdorferi (Lyme disease spirochete) protein is Outer surface protein A.